The following is a 415-amino-acid chain: Serine hydroxymethyltransferase (415 aa).

(6S)-5,6,7,8-tetrahydrofolate-binding positions include leucine 121 and 125 to 127 (GHL). At lysine 230 the chain carries N6-(pyridoxal phosphate)lysine.

The protein belongs to the SHMT family. Homodimer. Requires pyridoxal 5'-phosphate as cofactor.

It localises to the cytoplasm. It catalyses the reaction (6R)-5,10-methylene-5,6,7,8-tetrahydrofolate + glycine + H2O = (6S)-5,6,7,8-tetrahydrofolate + L-serine. It participates in one-carbon metabolism; tetrahydrofolate interconversion. The protein operates within amino-acid biosynthesis; glycine biosynthesis; glycine from L-serine: step 1/1. Functionally, catalyzes the reversible interconversion of serine and glycine with tetrahydrofolate (THF) serving as the one-carbon carrier. This reaction serves as the major source of one-carbon groups required for the biosynthesis of purines, thymidylate, methionine, and other important biomolecules. Also exhibits THF-independent aldolase activity toward beta-hydroxyamino acids, producing glycine and aldehydes, via a retro-aldol mechanism. The polypeptide is Serine hydroxymethyltransferase (Syntrophomonas wolfei subsp. wolfei (strain DSM 2245B / Goettingen)).